A 178-amino-acid chain; its full sequence is Thymidine kinase (178 aa).

13-20 (GPMFAGKS) serves as a coordination point for ATP. Glu-85 acts as the Proton acceptor in catalysis. A substrate-binding site is contributed by Phe-115. 2 residues coordinate Zn(2+): Cys-140 and Cys-143. 159–163 (IEIIG) lines the substrate pocket. The Zn(2+) site is built by Cys-172 and Cys-175.

Belongs to the thymidine kinase family.

It carries out the reaction thymidine + ATP = dTMP + ADP + H(+). In Myxoma virus (strain Uriarra) (MYXV), this protein is Thymidine kinase (TK).